Here is a 118-residue protein sequence, read N- to C-terminus: Large ribosomal subunit protein bL19 (118 aa).

This sequence belongs to the bacterial ribosomal protein bL19 family.

This protein is located at the 30S-50S ribosomal subunit interface and may play a role in the structure and function of the aminoacyl-tRNA binding site. The protein is Large ribosomal subunit protein bL19 of Beutenbergia cavernae (strain ATCC BAA-8 / DSM 12333 / CCUG 43141 / JCM 11478 / NBRC 16432 / NCIMB 13614 / HKI 0122).